A 448-amino-acid chain; its full sequence is Probable glycine dehydrogenase (decarboxylating) subunit 1 (448 aa).

Belongs to the GcvP family. N-terminal subunit subfamily. The glycine cleavage system is composed of four proteins: P, T, L and H. In this organism, the P 'protein' is a heterodimer of two subunits.

It catalyses the reaction N(6)-[(R)-lipoyl]-L-lysyl-[glycine-cleavage complex H protein] + glycine + H(+) = N(6)-[(R)-S(8)-aminomethyldihydrolipoyl]-L-lysyl-[glycine-cleavage complex H protein] + CO2. Functionally, the glycine cleavage system catalyzes the degradation of glycine. The P protein binds the alpha-amino group of glycine through its pyridoxal phosphate cofactor; CO(2) is released and the remaining methylamine moiety is then transferred to the lipoamide cofactor of the H protein. This is Probable glycine dehydrogenase (decarboxylating) subunit 1 from Shouchella clausii (strain KSM-K16) (Alkalihalobacillus clausii).